Consider the following 141-residue polypeptide: Large ribosomal subunit protein uL16 (141 aa).

Residues 1–17 (MLQPKRTKYRKVQKGKM) show a composition bias toward basic residues. Residues 1-29 (MLQPKRTKYRKVQKGKMKGNSQRGHELSN) form a disordered region.

Belongs to the universal ribosomal protein uL16 family. As to quaternary structure, part of the 50S ribosomal subunit.

Binds 23S rRNA and is also seen to make contacts with the A and possibly P site tRNAs. This is Large ribosomal subunit protein uL16 from Flavobacterium psychrophilum (strain ATCC 49511 / DSM 21280 / CIP 103535 / JIP02/86).